Consider the following 468-residue polypeptide: Uronate isomerase (468 aa).

It belongs to the metallo-dependent hydrolases superfamily. Uronate isomerase family.

It catalyses the reaction D-glucuronate = D-fructuronate. The catalysed reaction is aldehydo-D-galacturonate = keto-D-tagaturonate. It functions in the pathway carbohydrate metabolism; pentose and glucuronate interconversion. This Brachyspira hyodysenteriae (strain ATCC 49526 / WA1) protein is Uronate isomerase.